We begin with the raw amino-acid sequence, 64 residues long: Large ribosomal subunit protein uL30 (64 aa).

Belongs to the universal ribosomal protein uL30 family. As to quaternary structure, part of the 50S ribosomal subunit.

In Methylorubrum populi (strain ATCC BAA-705 / NCIMB 13946 / BJ001) (Methylobacterium populi), this protein is Large ribosomal subunit protein uL30.